The following is a 380-amino-acid chain: GATOR1 complex protein NPRL2 (380 aa).

The interval 1-133 (MGSSCRIECI…SKQKLVPIMT (133 aa)) is interaction with PDPK1. R78 contributes to the GDP binding site. The residue at position 78 (R78) is an Asymmetric dimethylarginine. Glycyl lysine isopeptide (Lys-Gly) (interchain with G-Cter in ubiquitin) cross-links involve residues K158 and K357.

The protein belongs to the NPR2 family. Within the GATOR complex, component of the GATOR1 subcomplex, made of DEPDC5, NPRL2 and NPRL3. GATOR1 mediates the strong interaction of the GATOR complex with small GTPases Rag (RagA/RRAGA, RagB/RRAGB, RagC/RRAGC and/or RagD/RRAGD) heterodimers. GATOR1 interacts with GPR155/LYCHOS; interaction takes place in presence of cholesterol and prevents interaction between GATOR1 and KICSTOR. Interacts with PDPK1. In terms of processing, in the presence of abundant amino acids, ubiquitinated at Lys-158 and Lys-357 via 'Lys-6'-linked ubiquitination by the WDR24 component of the GATOR2 complex, thereby inhibiting the GATOR1 complex and promoting mTORC1 activation. Post-translationally, asymmetric dimethylation at Arg-78 by PRMT1 inhibits the GTPase activator activity of the GATOR1 complex and consequently inducing timely mTORC1 activation under methionine-sufficient conditions.

It localises to the lysosome membrane. Catalytic component of the GATOR1 complex, a multiprotein complex that functions as an inhibitor of the amino acid-sensing branch of the mTORC1 pathway. In response to amino acid depletion, the GATOR1 complex has GTPase activating protein (GAP) activity and strongly increases GTP hydrolysis by RagA/RRAGA (or RagB/RRAGB) within heterodimeric Rag complexes, thereby turning them into their inactive GDP-bound form, releasing mTORC1 from lysosomal surface and inhibiting mTORC1 signaling. In the presence of abundant amino acids, the GATOR1 complex is ubiquitinated and inhibited by GATOR2. Within the GATOR1 complex, NPRL2 constitutes the catalytic subunit that mediates the GTPase activator activity and under methionine-sufficient conditions, the GTPase activator activity is inhibited by PRMT1 through methylation and consequently inducing timely mTORC1 activation. In terms of biological role, suppresses Src-dependent tyrosine phosphorylation and activation of PDPK1 and its downstream signaling. Down-regulates PDPK1 kinase activity by interfering with tyrosine phosphorylation at 'Tyr-9', 'Tyr-373' and 'Tyr-376' residues. May act as a tumor suppressor. Suppresses cell growth and enhances sensitivity to various anticancer drugs. The sequence is that of GATOR1 complex protein NPRL2 from Mus musculus (Mouse).